The primary structure comprises 166 residues: Lipoprotein signal peptidase (166 aa).

Transmembrane regions (helical) follow at residues 12–32 (WLWVVVAVLIIDLGSKFLILQ), 70–90 (WFFSGIAIGICVVLTVLMYRS), and 102–122 (ALIIGGALGNLFDRLWHGFVV). Active-site residues include D123 and D141. A helical transmembrane segment spans residues 137–157 (FNLADSAICIGAALIVLEGFL).

It belongs to the peptidase A8 family.

The protein localises to the cell inner membrane. It catalyses the reaction Release of signal peptides from bacterial membrane prolipoproteins. Hydrolyzes -Xaa-Yaa-Zaa-|-(S,diacylglyceryl)Cys-, in which Xaa is hydrophobic (preferably Leu), and Yaa (Ala or Ser) and Zaa (Gly or Ala) have small, neutral side chains.. It functions in the pathway protein modification; lipoprotein biosynthesis (signal peptide cleavage). This protein specifically catalyzes the removal of signal peptides from prolipoproteins. This is Lipoprotein signal peptidase from Klebsiella pneumoniae subsp. pneumoniae (strain ATCC 700721 / MGH 78578).